A 69-amino-acid polypeptide reads, in one-letter code: DNA-directed RNA polymerase subunit omega (69 aa).

This sequence belongs to the RNA polymerase subunit omega family. In terms of assembly, the RNAP catalytic core consists of 2 alpha, 1 beta, 1 beta' and 1 omega subunit. When a sigma factor is associated with the core the holoenzyme is formed, which can initiate transcription.

The catalysed reaction is RNA(n) + a ribonucleoside 5'-triphosphate = RNA(n+1) + diphosphate. In terms of biological role, promotes RNA polymerase assembly. Latches the N- and C-terminal regions of the beta' subunit thereby facilitating its interaction with the beta and alpha subunits. In Pelotomaculum thermopropionicum (strain DSM 13744 / JCM 10971 / SI), this protein is DNA-directed RNA polymerase subunit omega.